We begin with the raw amino-acid sequence, 97 residues long: Venom peptide HsVx1 (97 aa).

The N-terminal stretch at 1 to 20 is a signal peptide; it reads MSHLRIAVTFLCTLFALTAG.

It belongs to the scorpion La1-like peptide family. Post-translationally, contains 4 disulfide bonds. In terms of tissue distribution, expressed by the venom gland.

The protein resides in the secreted. The sequence is that of Venom peptide HsVx1 from Heterometrus spinifer (Asia giant forest scorpion).